The sequence spans 362 residues: Phenylalanine--tRNA ligase alpha subunit (362 aa).

E263 is a Mg(2+) binding site.

It belongs to the class-II aminoacyl-tRNA synthetase family. Phe-tRNA synthetase alpha subunit type 1 subfamily. Tetramer of two alpha and two beta subunits. Mg(2+) serves as cofactor.

It is found in the cytoplasm. The catalysed reaction is tRNA(Phe) + L-phenylalanine + ATP = L-phenylalanyl-tRNA(Phe) + AMP + diphosphate + H(+). The polypeptide is Phenylalanine--tRNA ligase alpha subunit (Caulobacter sp. (strain K31)).